The following is a 410-amino-acid chain: Probable tRNA sulfurtransferase (410 aa).

Positions 58–167 (AELTRRLQEV…RREIFVSVER (110 aa)) constitute a THUMP domain. ATP-binding positions include 185–186 (LL), 210–211 (HF), R267, G289, and Q298.

It belongs to the ThiI family.

It localises to the cytoplasm. It catalyses the reaction [ThiI sulfur-carrier protein]-S-sulfanyl-L-cysteine + a uridine in tRNA + 2 reduced [2Fe-2S]-[ferredoxin] + ATP + H(+) = [ThiI sulfur-carrier protein]-L-cysteine + a 4-thiouridine in tRNA + 2 oxidized [2Fe-2S]-[ferredoxin] + AMP + diphosphate. It carries out the reaction [ThiS sulfur-carrier protein]-C-terminal Gly-Gly-AMP + S-sulfanyl-L-cysteinyl-[cysteine desulfurase] + AH2 = [ThiS sulfur-carrier protein]-C-terminal-Gly-aminoethanethioate + L-cysteinyl-[cysteine desulfurase] + A + AMP + 2 H(+). Its pathway is cofactor biosynthesis; thiamine diphosphate biosynthesis. Functionally, catalyzes the ATP-dependent transfer of a sulfur to tRNA to produce 4-thiouridine in position 8 of tRNAs, which functions as a near-UV photosensor. Also catalyzes the transfer of sulfur to the sulfur carrier protein ThiS, forming ThiS-thiocarboxylate. This is a step in the synthesis of thiazole, in the thiamine biosynthesis pathway. The sulfur is donated as persulfide by IscS. The chain is Probable tRNA sulfurtransferase from Nocardia farcinica (strain IFM 10152).